We begin with the raw amino-acid sequence, 22 residues long: AEPNVTVTGAAGQIGYALLFRI.

9 to 15 (GAAGQIG) is a binding site for NAD(+).

The protein belongs to the LDH/MDH superfamily. MDH type 2 family.

The catalysed reaction is (S)-malate + NAD(+) = oxaloacetate + NADH + H(+). Catalyzes the reversible oxidation of malate to oxaloacetate. This is Malate dehydrogenase (mdh) from Actinoplanes missouriensis.